The sequence spans 300 residues: Acetylglutamate kinase (300 aa).

Substrate contacts are provided by residues 67 to 68, R89, and N194; that span reads GG.

The protein belongs to the acetylglutamate kinase family. ArgB subfamily.

It localises to the cytoplasm. It carries out the reaction N-acetyl-L-glutamate + ATP = N-acetyl-L-glutamyl 5-phosphate + ADP. Its pathway is amino-acid biosynthesis; L-arginine biosynthesis; N(2)-acetyl-L-ornithine from L-glutamate: step 2/4. Its function is as follows. Catalyzes the ATP-dependent phosphorylation of N-acetyl-L-glutamate. In Saccharophagus degradans (strain 2-40 / ATCC 43961 / DSM 17024), this protein is Acetylglutamate kinase.